A 346-amino-acid chain; its full sequence is Upstream stimulatory factor 2 (346 aa).

2 disordered regions span residues 1–44 (MDML…PGAE) and 215–244 (APRT…NEVE). A compositionally biased stretch (low complexity) spans 11–20 (AASATAAAAA). Residues 226–244 (DGTRTPRDERRRAQHNEVE) show a composition bias toward basic and acidic residues. Residues 235-290 (RRRAQHNEVERRRRDKINNWIVQLSKIIPDCNADNSKTGASKGGILSKACDYIREL) form the bHLH domain. The tract at residues 307–328 (LQMDNELLRQQIEELKNENALL) is leucine-zipper.

In terms of assembly, interacts with MAF. Efficient DNA binding requires dimerization with another bHLH protein. Binds DNA as a homodimer or a heterodimer (USF1/USF2). In vivo, the USF1/USF2A heterodimer represents over 66% of the usf binding activity whereas the USF1 and USF2A homodimers represent less than 10%. The USF1/USF2B heterodimer accounted for almost 15% in some cell. As to expression, ubiquitous.

The protein resides in the nucleus. Its function is as follows. Transcription factor that binds to a symmetrical DNA sequence (E-boxes) (5'-CACGTG-3') that is found in a variety of viral and cellular promoters. The polypeptide is Upstream stimulatory factor 2 (USF2) (Homo sapiens (Human)).